Consider the following 172-residue polypeptide: uncharacterized protein (172 aa).

This is an uncharacterized protein from Mycoplasma pneumoniae (strain ATCC 29342 / M129 / Subtype 1) (Mycoplasmoides pneumoniae).